We begin with the raw amino-acid sequence, 85 residues long: MAHKKAGGSSRNGRDSESKRLGVKRFGDQQVLAGNILVRQRGTPFLAGINVGTGRDHTLYAKAAGKVQFVRRGPKSRTYVDVVTN.

A disordered region spans residues 1–23; the sequence is MAHKKAGGSSRNGRDSESKRLGV.

The protein belongs to the bacterial ribosomal protein bL27 family.

This is Large ribosomal subunit protein bL27 from Nitrosococcus oceani (strain ATCC 19707 / BCRC 17464 / JCM 30415 / NCIMB 11848 / C-107).